The following is a 160-amino-acid chain: SUMO-conjugating enzyme SCE1 (160 aa).

Position 2 is an N-acetylalanine (Ala-2). Residues 5-158 (IARGRLAEER…VKLQSKQYPA (154 aa)) form the UBC core domain. The active-site Glycyl thioester intermediate is the Cys-94.

The protein belongs to the ubiquitin-conjugating enzyme family. Interacts with SIZ1 (via PHD domain) and MMS21. Interacts with TCP14 and TCP15. Interacts with KIN10.

The protein operates within protein modification; protein sumoylation. Functionally, SUMO-conjugating enzyme that accepts the SUMO proteins from the E1 SUMO-activating heterodimer SAE1/SAE2 and catalyzes its covalent attachment to other proteins with the E3 SUMO ligases SIZ1 and MMS21. Associates with SIZ1 for sumoylation of the transcription factor GTE3. This chain is SUMO-conjugating enzyme SCE1 (SCE1), found in Arabidopsis thaliana (Mouse-ear cress).